The following is a 177-amino-acid chain: Large ribosomal subunit protein uL6 (177 aa).

It belongs to the universal ribosomal protein uL6 family. As to quaternary structure, part of the 50S ribosomal subunit.

In terms of biological role, this protein binds to the 23S rRNA, and is important in its secondary structure. It is located near the subunit interface in the base of the L7/L12 stalk, and near the tRNA binding site of the peptidyltransferase center. In Methylobacillus flagellatus (strain ATCC 51484 / DSM 6875 / VKM B-1610 / KT), this protein is Large ribosomal subunit protein uL6.